Reading from the N-terminus, the 190-residue chain is Probable nicotinate-nucleotide adenylyltransferase (190 aa).

This sequence belongs to the NadD family.

It catalyses the reaction nicotinate beta-D-ribonucleotide + ATP + H(+) = deamido-NAD(+) + diphosphate. The protein operates within cofactor biosynthesis; NAD(+) biosynthesis; deamido-NAD(+) from nicotinate D-ribonucleotide: step 1/1. Functionally, catalyzes the reversible adenylation of nicotinate mononucleotide (NaMN) to nicotinic acid adenine dinucleotide (NaAD). The sequence is that of Probable nicotinate-nucleotide adenylyltransferase from Myxococcus xanthus (strain DK1622).